Reading from the N-terminus, the 518-residue chain is MIPDVSQALAWLEKHPQALQGIQRGLERETLRVNADGTLATTGHPLALGSALTHKWITTDFAEALLEFITPVDGDIEHMLTFMRDVHRYTARQLGDERMWPLSMPCYIAPGQDIELAQYGTSNVGRLKTLYREGLKNRYGALMQTISGVHYNFSLPMAFWQAKCGVEDVESGKEAISAGYFRSIRNYYRFGWVIPYLFGASPAICSSFLQGKPTTLPFEEAGNGMYYLPYATSLRLSDLGYTNKSQSNLGITFNDLHEYVAGLKRAIKTPSEEYAKIGLQKDGKYLQINSNILQIENELYAPIRPKRVTRRGETPSDALLRGGIEYIEVRSLDINPFSPIGVDAQQVRFLDLFMVWCALADAPEMSSDELLCTRTNWNRVILEGRKPGLTLGIGCESAQFPLAQVGKDLFRDLRRVAQTLDSIHGGQAYQQVCDELLACFDDPELTFSARILRSMIEEGIGGTGRALADRYRTQLREEPLEILSEADFIAEREASVARQKKVEAEDSEPFEALLARHA.

The protein belongs to the glutamate--cysteine ligase type 1 family. Type 1 subfamily.

The catalysed reaction is L-cysteine + L-glutamate + ATP = gamma-L-glutamyl-L-cysteine + ADP + phosphate + H(+). Its pathway is sulfur metabolism; glutathione biosynthesis; glutathione from L-cysteine and L-glutamate: step 1/2. This is Glutamate--cysteine ligase from Klebsiella pneumoniae (strain 342).